The primary structure comprises 130 residues: Small ribosomal subunit protein uS11 (130 aa).

It belongs to the universal ribosomal protein uS11 family. Part of the 30S ribosomal subunit. Interacts with proteins S7 and S18. Binds to IF-3.

Functionally, located on the platform of the 30S subunit, it bridges several disparate RNA helices of the 16S rRNA. Forms part of the Shine-Dalgarno cleft in the 70S ribosome. In Prochlorococcus marinus (strain MIT 9313), this protein is Small ribosomal subunit protein uS11.